The primary structure comprises 155 residues: MGASVKPAARRNARQFALQAIYSWQITKENIATVEEQFLSGGKYDEEEHHAAEPALAMPETDVAYFRDLLTGVALSHMELDSKLRPFVSRPMQDLDLMELALLRLAMYEMTRREDVPYKVVINEAIELAKVFAAEDSHKFVNGVLDKAAPHVRKK.

It belongs to the NusB family.

Its function is as follows. Involved in transcription antitermination. Required for transcription of ribosomal RNA (rRNA) genes. Binds specifically to the boxA antiterminator sequence of the ribosomal RNA (rrn) operons. This chain is Transcription antitermination protein NusB, found in Vibrio atlanticus (strain LGP32) (Vibrio splendidus (strain Mel32)).